The primary structure comprises 148 residues: ATP synthase epsilon chain (148 aa).

Belongs to the ATPase epsilon chain family. F-type ATPases have 2 components, CF(1) - the catalytic core - and CF(0) - the membrane proton channel. CF(1) has five subunits: alpha(3), beta(3), gamma(1), delta(1), epsilon(1). CF(0) has three main subunits: a, b and c.

Its subcellular location is the cell membrane. Functionally, produces ATP from ADP in the presence of a proton gradient across the membrane. The protein is ATP synthase epsilon chain of Streptococcus thermophilus (strain ATCC BAA-250 / LMG 18311).